A 306-amino-acid polypeptide reads, in one-letter code: ORF-B protein (306 aa).

The next 3 membrane-spanning stretches (helical) occupy residues Met-92 to Ile-112, Leu-120 to Trp-140, and Val-161 to Ser-181.

Interacts with host RACK1.

Its subcellular location is the host cytoplasm. The protein localises to the host cell membrane. The protein is ORF-B protein of Sander vitreus (Walleye).